The primary structure comprises 330 residues: Thioredoxin domain-containing protein 6 (330 aa).

In terms of domain architecture, Thioredoxin spans 11-115 (QVNISTQELW…QKTILDQLEA (105 aa)). An NDK region spans residues 157–303 (ERTCTLAIIK…LFPSLKFSDK (147 aa)). The segment at 300-330 (FSDKDTEAPQGGEAEATAGPTEALCFPEDVD) is disordered. Positions 307 to 322 (APQGGEAEATAGPTEA) are enriched in low complexity.

This sequence belongs to the NDK family. Monomer and homodimer. Detected at very low levels in testis, lung and brain.

The protein localises to the cytoplasm. It is found in the cytoskeleton. Its subcellular location is the cilium axoneme. The protein resides in the dynein axonemal particle. Functionally, may be a regulator of microtubule physiology. In Homo sapiens (Human), this protein is Thioredoxin domain-containing protein 6.